The sequence spans 222 residues: Pyridoxine/pyridoxamine 5'-phosphate oxidase (222 aa).

FMN contacts are provided by residues R71–K76, Y86–T87, K93, and Q115. K76 serves as a coordination point for substrate. Residues Y133, R137, and S141 each coordinate substrate. Residues Q150 to S151 and W195 each bind FMN. Substrate is bound at residue R201 to H203. Residue R205 coordinates FMN.

It belongs to the pyridoxamine 5'-phosphate oxidase family. Homodimer. The cofactor is FMN.

The catalysed reaction is pyridoxamine 5'-phosphate + O2 + H2O = pyridoxal 5'-phosphate + H2O2 + NH4(+). The enzyme catalyses pyridoxine 5'-phosphate + O2 = pyridoxal 5'-phosphate + H2O2. It functions in the pathway cofactor metabolism; pyridoxal 5'-phosphate salvage; pyridoxal 5'-phosphate from pyridoxamine 5'-phosphate: step 1/1. Its pathway is cofactor metabolism; pyridoxal 5'-phosphate salvage; pyridoxal 5'-phosphate from pyridoxine 5'-phosphate: step 1/1. Functionally, catalyzes the oxidation of either pyridoxine 5'-phosphate (PNP) or pyridoxamine 5'-phosphate (PMP) into pyridoxal 5'-phosphate (PLP). The sequence is that of Pyridoxine/pyridoxamine 5'-phosphate oxidase from Caulobacter vibrioides (strain ATCC 19089 / CIP 103742 / CB 15) (Caulobacter crescentus).